A 390-amino-acid chain; its full sequence is Galactokinase (390 aa).

A substrate-binding site is contributed by 35–38 (EHTD). Residue 125-131 (GAGLSSS) coordinates ATP. Residues S131 and E163 each coordinate Mg(2+). D175 functions as the Proton acceptor in the catalytic mechanism. Y224 provides a ligand contact to substrate.

This sequence belongs to the GHMP kinase family. GalK subfamily.

It is found in the cytoplasm. The catalysed reaction is alpha-D-galactose + ATP = alpha-D-galactose 1-phosphate + ADP + H(+). It functions in the pathway carbohydrate metabolism; galactose metabolism. Functionally, catalyzes the transfer of the gamma-phosphate of ATP to D-galactose to form alpha-D-galactose-1-phosphate (Gal-1-P). This Proteus mirabilis (strain HI4320) protein is Galactokinase.